The chain runs to 66 residues: Large ribosomal subunit protein bL35 (66 aa).

It belongs to the bacterial ribosomal protein bL35 family.

The sequence is that of Large ribosomal subunit protein bL35 from Lysinibacillus sphaericus (strain C3-41).